The sequence spans 261 residues: MNGLISQACGSHRPRRPSSLGAVAILIAATLFATVVAGCGKKPTTASSPSPGSPSPEAQQILQDSSKATKGLHSVHVVVTVNNLSTLPFESVDADVTNQPQGNGQAVGNAKVRMKPNTPVVATEFLVTNKTMYTKRGGDYVSVGPAEKIYDPGIILDKDRGLGAVVGQVQNPTIQGRDAIDGLATVKVSGTIDAAVIDPIVPQLGKGGGRLPITLWIVDTNASTPAPAANLVRMVIDKDQGNVDITLSNWGAPVTIPNPAG.

The first 38 residues, 1 to 38, serve as a signal peptide directing secretion; the sequence is MNGLISQACGSHRPRRPSSLGAVAILIAATLFATVVAG. Residue Cys-39 is the site of N-palmitoyl cysteine attachment. The S-diacylglycerol cysteine moiety is linked to residue Cys-39. Residues 42–61 form a disordered region; sequence KPTTASSPSPGSPSPEAQQI.

It belongs to the LppX/LprAFG lipoprotein family. In terms of assembly, monomer. Modified by Lgt on Cys-39 with an S-linked diacylglycerol with a mixture of C16, C18 and C19 fatty acids (palmitic, stearic and tuberculostearic acid respectively), signal peptide is removed by LspA, modified by Lnt with an amide-linked mixture of C16 and C19 fatty acids.

It localises to the cell membrane. Functionally, might be involved in transporting short diacylated glycolipids to the cell outer membrane. Binds glycolipids that contain a diacylated glycerophosphate or a diacylated phosphatidylinositol moiety with C14 and C16 chains (upon overexpression in M.smegmatis; M.smegmatis does not encode this gene). Overexpression in M.smegmatis increases the cell wall glycolipid LAM/LM ratio (lipoarabinomannan/lipomannan), suggesting perhaps this protein is involved in the preferential translocation of diacylated LAM to the outer cell membrane. Overexpressing M.smegmatis cells adhere less well to hexadecane droplets, indicating decrease in the hydrophobicity of the cell surface, and have a slightly increased resistance to the antibiotic ethambutol. The protein is Putative diacylated glycolipid transporter LprF (lprF) of Mycobacterium bovis (strain ATCC BAA-935 / AF2122/97).